Consider the following 177-residue polypeptide: Large ribosomal subunit protein uL5 (177 aa).

Belongs to the universal ribosomal protein uL5 family. Part of the 50S ribosomal subunit; part of the 5S rRNA/L5/L18/L25 subcomplex. Contacts the 5S rRNA and the P site tRNA. Forms a bridge to the 30S subunit in the 70S ribosome.

Its function is as follows. This is one of the proteins that bind and probably mediate the attachment of the 5S RNA into the large ribosomal subunit, where it forms part of the central protuberance. In the 70S ribosome it contacts protein S13 of the 30S subunit (bridge B1b), connecting the 2 subunits; this bridge is implicated in subunit movement. Contacts the P site tRNA; the 5S rRNA and some of its associated proteins might help stabilize positioning of ribosome-bound tRNAs. The chain is Large ribosomal subunit protein uL5 from Wolbachia pipientis wMel.